A 424-amino-acid chain; its full sequence is Homeobox even-skipped homolog protein 2 (424 aa).

Disordered regions lie at residues Pro-18–Thr-65 and Thr-132–Gln-178. Polar residues-rich tracts occupy residues Arg-50–Thr-65 and Thr-132–Asp-145. The segment covering Asn-146–Gly-175 has biased composition (low complexity). Residues Val-179–Arg-238 constitute a DNA-binding region (homeobox).

This sequence belongs to the even-skipped homeobox family.

It is found in the nucleus. The protein is Homeobox even-skipped homolog protein 2 (EVX2) of Heterodontus francisci (Horn shark).